The primary structure comprises 616 residues: RNA-directed RNA polymerase (616 aa).

It catalyses the reaction RNA(n) + a ribonucleoside 5'-triphosphate = RNA(n+1) + diphosphate. In terms of biological role, RNA-dependent RNA polymerase which replicates the viral genome. The chain is RNA-directed RNA polymerase from White clover cryptic virus 1 (isolate Boccardo/2004) (WCCV-1).